Consider the following 330-residue polypeptide: MSFQTNYIHLADEILSGKTSISYEQALEILNSDENWWEIYAAALYLKNQVSRNNIRLNVLLSAKQGLCAENCGYCSQSKESTADIDKFGLLPQNVILKQAIVAHQNGASVFCIAMSGTKPSKREIEQLCQVIPEIKKSLPLEICLTAGFLDREQLHQLKQAGIDRINHNLNTPEENYPNIATTHSFKDRCDTLERIHNEDIDVCSGFICGMGESDEGLITLAFRLKELDPYSIPVNFLLAVEGTPLGKYNYLTPIKCLKIMAMLRFVFPFKELRLSAGREVHFENFESLVTLLVDSTFLGNYLTEGGRNQHTDIEFLEKLQLNHTKKELI.

Residues 53 to 276 (NNIRLNVLLS…VFPFKELRLS (224 aa)) enclose the Radical SAM core domain. [4Fe-4S] cluster-binding residues include C68, C72, and C75. The [2Fe-2S] cluster site is built by C112, C144, C204, and R274.

It belongs to the radical SAM superfamily. Biotin synthase family. As to quaternary structure, homodimer. The cofactor is [4Fe-4S] cluster. Requires [2Fe-2S] cluster as cofactor.

It catalyses the reaction (4R,5S)-dethiobiotin + (sulfur carrier)-SH + 2 reduced [2Fe-2S]-[ferredoxin] + 2 S-adenosyl-L-methionine = (sulfur carrier)-H + biotin + 2 5'-deoxyadenosine + 2 L-methionine + 2 oxidized [2Fe-2S]-[ferredoxin]. Its pathway is cofactor biosynthesis; biotin biosynthesis; biotin from 7,8-diaminononanoate: step 2/2. Functionally, catalyzes the conversion of dethiobiotin (DTB) to biotin by the insertion of a sulfur atom into dethiobiotin via a radical-based mechanism. The sequence is that of Biotin synthase from Streptococcus agalactiae serotype V (strain ATCC BAA-611 / 2603 V/R).